Reading from the N-terminus, the 393-residue chain is NAD(P)H-quinone oxidoreductase subunit H, chloroplastic (393 aa).

The protein belongs to the complex I 49 kDa subunit family. As to quaternary structure, NDH is composed of at least 16 different subunits, 5 of which are encoded in the nucleus.

It is found in the plastid. The protein localises to the chloroplast thylakoid membrane. The enzyme catalyses a plastoquinone + NADH + (n+1) H(+)(in) = a plastoquinol + NAD(+) + n H(+)(out). It carries out the reaction a plastoquinone + NADPH + (n+1) H(+)(in) = a plastoquinol + NADP(+) + n H(+)(out). NDH shuttles electrons from NAD(P)H:plastoquinone, via FMN and iron-sulfur (Fe-S) centers, to quinones in the photosynthetic chain and possibly in a chloroplast respiratory chain. The immediate electron acceptor for the enzyme in this species is believed to be plastoquinone. Couples the redox reaction to proton translocation, and thus conserves the redox energy in a proton gradient. In Olimarabidopsis pumila (Dwarf rocket), this protein is NAD(P)H-quinone oxidoreductase subunit H, chloroplastic.